Here is a 258-residue protein sequence, read N- to C-terminus: Thrombin-like enzyme ancrod-2 (258 aa).

The N-terminal stretch at 1 to 18 is a signal peptide; it reads MVLIRVLANLVILQLSYA. Residues 19–24 constitute a propeptide that is removed on maturation; the sequence is QKSSEL. One can recognise a Peptidase S1 domain in the interval 25 to 251; the sequence is VIGGDECNIN…HLHWILSIMA (227 aa). Cystine bridges form between Cys31-Cys165, Cys52-Cys68, Cys102-Cys256, Cys144-Cys212, Cys176-Cys191, and Cys202-Cys227. Residues His67 and Asp112 each act as charge relay system in the active site. N-linked (GlcNAc...) asparagine glycosylation is found at Asn123 and Asn172. The active-site Charge relay system is the Ser206. An N-linked (GlcNAc...) asparagine glycan is attached at Asn253.

It belongs to the peptidase S1 family. Snake venom subfamily. Monomer. As to expression, expressed by the venom gland.

Its subcellular location is the secreted. The catalysed reaction is Selective cleavage of Arg-|-Xaa bond in fibrinogen, to form fibrin, and release fibrinopeptide A. The specificity of further degradation of fibrinogen varies with species origin of the enzyme.. Thrombin-like snake venom serine protease. Cleaves fibrinogen (FGA) to split of fibrinopeptides AM, AO, and AY; the aberrant fibrinogen is then incapable of being cross-linked, forming easily dispersible clots. In Calloselasma rhodostoma (Malayan pit viper), this protein is Thrombin-like enzyme ancrod-2.